Consider the following 959-residue polypeptide: MMS19 nucleotide excision repair protein (959 aa).

HEAT repeat units lie at residues 794–828 (QKLFHTIMGKMGSKLANYCVHHLKAFVYVLKATPQ), 832–871 (KLNIEQLGPLLFKSLEEHNEAQSLCIALGICEKFVAQQDT), 874–915 (QGHL…YPTF), and 918–956 (LPHKVDVTLALAAALDDPKRLVRNTAVKARNAWYLVGAP).

This sequence belongs to the MET18/MMS19 family. Component of the CIA complex. Interacts with Xpd and galla-2. Binds to microtubules. As to expression, expressed in embryos (at protein level).

It localises to the cytoplasm. The protein localises to the cytoskeleton. Its subcellular location is the spindle. It is found in the nucleus. The protein resides in the midbody. Key component of the cytosolic iron-sulfur protein assembly (CIA) complex, a multiprotein complex that mediates the incorporation of iron-sulfur cluster into apoproteins specifically involved in DNA metabolism and genomic integrity. In the CIA complex, MMS19 acts as an adapter between early-acting CIA components and a subset of cellular target iron-sulfur proteins. Essential for diploid cell cycles, organ growth and development. Regulates mitosis by binding to Xpd and thereby competing with the Xpd-mediated repression on the Cdk-activating kinase (CAK) complex. Regulates the centrosomal localization of the MT regulator tacc, a downstream target of aurA kinase. Binds to microtubules (MT). Regulates spindle and astral MT growth, MT stability and bundling. In neuroblasts, necessary for timely and coordinated spindle assembly and orientation which is necessary for mitotic progression. In young embryos, the maternal protein is important for progression through mitosis. The sequence is that of MMS19 nucleotide excision repair protein from Drosophila melanogaster (Fruit fly).